A 1869-amino-acid polypeptide reads, in one-letter code: Chitin synthase csm1 (1869 aa).

Residues 1–778 (MAQHRCVGGN…CWMEIAQLSD (778 aa)) enclose the Myosin motor domain. Residue 103 to 110 (GESGSGKT) coordinates ATP. 4 N-linked (GlcNAc...) asparagine glycosylation sites follow: Asn-122, Asn-290, Asn-427, and Asn-558. The tract at residues 579 to 653 (HPQERTTVMQ…KPSEEGASGQ (75 aa)) is disordered. The span at 583-593 (RTTVMQASVSS) shows a compositional bias: polar residues. The tract at residues 658–682 (LDNVTKSFHAQNTNAYFVFCLKPND) is actin-binding. Asn-660 carries N-linked (GlcNAc...) asparagine glycosylation. 2 helical membrane passes run 880 to 900 (WVFI…QHLG) and 919 to 939 (FIIW…PMLV). N-linked (GlcNAc...) asparagine glycans are attached at residues Asn-1029, Asn-1054, and Asn-1120. The helical transmembrane segment at 1191 to 1211 (FILAVTIILCSIIAFKFFAAL) threads the bilayer. N-linked (GlcNAc...) asparagine glycosylation is found at Asn-1448 and Asn-1554. A run of 3 helical transmembrane segments spans residues 1579–1599 (FIVF…AYIV), 1612–1632 (VPVL…IIFI), and 1639–1659 (MIAW…GLPL). Residues 1811-1866 (LPSDDALLAEIREILRTADLMTVTKKGVKQELERRFGVNLDSRRAYINSATEALLS) enclose the DEK-C domain.

It in the N-terminal section; belongs to the TRAFAC class myosin-kinesin ATPase superfamily. Myosin family. This sequence in the C-terminal section; belongs to the chitin synthase family. Class V subfamily.

Its subcellular location is the cell membrane. It localises to the cell septum. The protein resides in the cell tip. It carries out the reaction [(1-&gt;4)-N-acetyl-beta-D-glucosaminyl](n) + UDP-N-acetyl-alpha-D-glucosamine = [(1-&gt;4)-N-acetyl-beta-D-glucosaminyl](n+1) + UDP + H(+). In terms of biological role, polymerizes chitin, a structural polymer of the cell wall and septum, by transferring the sugar moiety of UDP-GlcNAc to the non-reducing end of the growing chitin polymer. Involved in mycelial growth. The protein is Chitin synthase csm1 of Pyricularia grisea (Crabgrass-specific blast fungus).